The chain runs to 145 residues: Aminoglycoside N(6')-acetyltransferase type 1 (145 aa).

The region spanning 1-145 (MDIRQMNRTH…ERVIFYRKRC (145 aa)) is the N-acetyltransferase domain. The substrate site is built by W22, H25, Y66, and E79. Residues 81-83 (IFV) and 89-94 (QRGVAK) contribute to the acetyl-CoA site. Position 115 (D115) interacts with substrate. Residue N120 coordinates acetyl-CoA. Residue E136 participates in substrate binding.

As to quaternary structure, homodimer.

It carries out the reaction kanamycin B + acetyl-CoA = N(6')-acetylkanamycin B + CoA + H(+). Catalyzes the transfer of an acetyl group from acetyl-CoA to the 6'-amino group of aminoglycoside molecules conferring resistance to antibiotics containing the purpurosamine ring. The polypeptide is Aminoglycoside N(6')-acetyltransferase type 1 (Salmonella typhimurium (strain LT2 / SGSC1412 / ATCC 700720)).